A 1539-amino-acid chain; its full sequence is Lysine-specific demethylase 5D (1539 aa).

Residues 14–55 (CPVFEPSWAEFQDPLGYIAKIRPIAEKSGICKIRPPADWQPP) enclose the JmjN domain. The 91-residue stretch at 79-169 (TRVKLNYLDQ…IIYPYEMFQS (91 aa)) folds into the ARID domain. The disordered stretch occupies residues 192-228 (PHSIPLRQSVQPSKFSSYSRRAKRLQPDPEPTEEDIE). The span at 197–210 (LRQSVQPSKFSSYS) shows a compositional bias: polar residues. Glycyl lysine isopeptide (Lys-Gly) (interchain with G-Cter in SUMO2) cross-links involve residues lysine 205, lysine 229, lysine 244, and lysine 272. Serine 291 and serine 307 each carry phosphoserine. The segment at 316 to 362 (ICQVCSRGDEDDKLLFCDGCDDNYHIFCLLPPLPEIPRGIWRCPKCI) adopts a PHD-type 1 zinc-finger fold. A 2-oxoglutarate-binding site is contributed by tyrosine 430. Residues 458–624 (EYATSGWNLN…AGRQCIEHYR (167 aa)) enclose the JmjC domain. Residues histidine 504 and glutamate 506 each contribute to the Fe cation site. Serine 512, asparagine 514, and lysine 522 together coordinate 2-oxoglutarate. Histidine 592 provides a ligand contact to Fe cation. The segment at 697-749 (CIKCKTTCFLSALACYDCPDGLVCLSHINDLCKCSSSRQYLRYRYTLDELPTM) adopts a C5HC2 zinc-finger fold. Serine 884 carries the phosphoserine modification. The PHD-type 2 zinc-finger motif lies at 1174–1235 (ICVCGQVPAG…DTKFLCPLCM (62 aa)). Residue serine 1346 is modified to Phosphoserine. The segment at 1429 to 1521 (HQGSRTRSRA…QHKDSGSSAA (93 aa)) is disordered. Over residues 1432–1446 (SRTRSRALERRRRRQ) the composition is skewed to basic residues. A compositionally biased stretch (basic and acidic residues) spans 1477 to 1491 (GREEEHYQEKADREN). A compositionally biased stretch (polar residues) spans 1494-1521 (LTPSTDHSPFLKGNQNSLQHKDSGSSAA).

Belongs to the JARID1 histone demethylase family. Interacts with PCGF6, MSH5, ZMYND8, AR. Requires L-ascorbate as cofactor. Fe(2+) is required as a cofactor. As to expression, expression is highly down-regulated in metastatic prostate tumors.

It is found in the nucleus. It catalyses the reaction N(6),N(6),N(6)-trimethyl-L-lysyl(4)-[histone H3] + 3 2-oxoglutarate + 3 O2 = L-lysyl(4)-[histone H3] + 3 formaldehyde + 3 succinate + 3 CO2. Functionally, histone demethylase that specifically demethylates 'Lys-4' of histone H3, thereby playing a central role in histone code. Does not demethylate histone H3 'Lys-9', H3 'Lys-27', H3 'Lys-36', H3 'Lys-79' or H4 'Lys-20'. Demethylates trimethylated and dimethylated but not monomethylated H3 'Lys-4'. May play a role in spermatogenesis. Involved in transcriptional repression of diverse metastasis-associated genes; in this function seems to cooperate with ZMYND8. Suppresses prostate cancer cell invasion. Regulates androgen receptor (AR) transcriptional activity by demethylating H3K4me3 active transcription marks. The polypeptide is Lysine-specific demethylase 5D (KDM5D) (Homo sapiens (Human)).